Here is a 753-residue protein sequence, read N- to C-terminus: Taperin (753 aa).

Residues 141-348 (FDSPAAPRRR…IRPSSKPDME (208 aa)) form a disordered region. The span at 182 to 197 (PAPPVLPSQPAPPISP) shows a compositional bias: pro residues. 2 stretches are compositionally biased toward polar residues: residues 230–239 (LQKTGSNSFT) and 250–263 (VNRS…TQES). Ser-274 carries the post-translational modification Phosphoserine. Residues 300 to 322 (TPSATPVGPPAFLAPSPASATPS) show a composition bias toward low complexity. A compositionally biased stretch (polar residues) spans 323–335 (QRQWVSSATSAND). Residues 337-347 (FEIRPSSKPDM) show a composition bias toward basic and acidic residues. Phosphoserine is present on residues Ser-402, Ser-458, and Ser-502. The tract at residues 438 to 488 (GCPRPAISDTDKSVRRQRPASPPPFLPATTEAEPAEGLGVPGLTKNGQEPV) is disordered. Disordered regions lie at residues 544–583 (FTVV…SGPH) and 637–676 (FEYP…DSEK). Positions 559 to 571 (HLSQTNGQFQQGA) are enriched in polar residues. The segment covering 648-672 (EEAEEEEEEEEEEEGEDGEEEEVGP) has biased composition (acidic residues).

This sequence belongs to the taperin family. In terms of assembly, interacts with GRXCR2; the interaction restricts TPRN to the stereocilum basal region. Interacts with actin ACTB; the interaction may stabilize stereocilia. Interacts with CLIC5. Interacts with PTPRQ. TPRN, CLIC5 and PTPQR form concentric rings at the base of stereocilia and may form a complex. Interacts with phosphatase PPP1CA; the interaction results in inhibition of PPC1A phosphatase activity. Interacts with DNA damage response proteins XRCC6/KU70, XRCC5/KU80, PARP1, TOP1 and TOP2A; these interactions recruit TPRN to sites of DNA damage where it may play a role in DNA repair.

The protein localises to the cell projection. It is found in the stereocilium. It localises to the microvillus. The protein resides in the nucleus. Its subcellular location is the nucleoplasm. The protein localises to the cytoplasm. Functionally, essential for hearing. Required for maintenance of stereocilia on both inner and outer hair cells. Necessary for the integrity of the stereociliary rootlet. May act as an actin cytoskeleton regulator involved in the regulation of actin dynamics at the pointed end in hair cells. Forms rings at the base of stereocilia and binds actin filaments in the stereocilia which may stabilize the stereocilia. Acts as a strong inhibitor of PPP1CA phosphatase activity. Recruited to sites of DNA damage and may play a role in DNA damage repair. This is Taperin (Tprn) from Rattus norvegicus (Rat).